Reading from the N-terminus, the 477-residue chain is NADH-quinone oxidoreductase subunit N (477 aa).

The next 13 membrane-spanning stretches (helical) occupy residues 7–27 (VLAHALPELILAGGVLLLILI), 37–57 (GPMTELAVGLLGIAILTLVLG), 77–97 (FMKVLVLIGSLVSLIMGQTYL), 109–129 (ILILLSTLGMLMLISATGLIA), 162–182 (FVLGALSSGMLLYGASLIYGF), 201–221 (LGVVFGLVFLTAGLAFKMSTV), 233–253 (GAPTPVTAFFASAPKLAAIAI), 272–292 (IIVFISILSMALGSFAAIGQT), 297–317 (LMAYSSIGHMGFALVGLAAGT), 323–343 (GVLAYMAIYLVMTLGTFAAIL), 369–389 (AFFLAIMMFSLAGIPPLAGFF), 402–424 (HLYPLAVIGVLCSTVGAYYYLRI), and 446–466 (AVLIVTGLAVLLLCVYPGSFV).

Belongs to the complex I subunit 2 family. In terms of assembly, NDH-1 is composed of 14 different subunits. Subunits NuoA, H, J, K, L, M, N constitute the membrane sector of the complex.

The protein localises to the cell inner membrane. The enzyme catalyses a quinone + NADH + 5 H(+)(in) = a quinol + NAD(+) + 4 H(+)(out). Its function is as follows. NDH-1 shuttles electrons from NADH, via FMN and iron-sulfur (Fe-S) centers, to quinones in the respiratory chain. The immediate electron acceptor for the enzyme in this species is believed to be ubiquinone. Couples the redox reaction to proton translocation (for every two electrons transferred, four hydrogen ions are translocated across the cytoplasmic membrane), and thus conserves the redox energy in a proton gradient. The chain is NADH-quinone oxidoreductase subunit N from Beijerinckia indica subsp. indica (strain ATCC 9039 / DSM 1715 / NCIMB 8712).